Consider the following 193-residue polypeptide: Riboflavin kinase (193 aa).

Positions 1 to 59 (MGISQQAASQHLRELEDEGLITRNAEGKGISVMVTDKGRHELLRVYNILHDSLHSRPDH) are H-T-H motif-like. The tract at residues 60-193 (VEITGTLVSG…TIRIPLEQED (134 aa)) is riboflavin kinase. 69–74 (GMNEGA) is a CDP binding site. Mg(2+) contacts are provided by threonine 98 and asparagine 100. Residues threonine 156 and glutamate 164 each contribute to the FMN site. 169–172 (LDIR) serves as a coordination point for CDP.

It belongs to the archaeal riboflavin kinase family. The cofactor is Mg(2+).

It catalyses the reaction riboflavin + CTP = CDP + FMN + H(+). Its pathway is cofactor biosynthesis; FMN biosynthesis; FMN from riboflavin (CTP route): step 1/1. Functionally, catalyzes the CTP-dependent phosphorylation of riboflavin (vitamin B2) to form flavin mononucleotide (FMN). The chain is Riboflavin kinase (ribK) from Cenarchaeum symbiosum (strain A).